We begin with the raw amino-acid sequence, 185 residues long: Heavy metal-associated isoprenylated plant protein 11 (185 aa).

Residues 39-106 form the HMA domain; the sequence is QQNTNVVFKL…ICKHVAIIAA (68 aa). Over residues 109-158 the composition is skewed to basic and acidic residues; that stretch reads IREPEQNRNPVTRREPNREPEQNRSRVTRREPSREPEPNRAPLARRESRP. The interval 109-185 is disordered; it reads IREPEQNRNP…GENSDGCIIM (77 aa). Cysteine 182 carries the cysteine methyl ester modification. The S-farnesyl cysteine moiety is linked to residue cysteine 182. Positions 183 to 185 are cleaved as a propeptide — removed in mature form; sequence IIM.

This sequence belongs to the HIPP family.

Probable heavy-metal-binding protein. In Arabidopsis thaliana (Mouse-ear cress), this protein is Heavy metal-associated isoprenylated plant protein 11.